The following is a 777-amino-acid chain: Acyl-CoA dehydrogenase family member 11 (777 aa).

Residues 501 to 511 (FCMTEPDVASS), 509 to 511 (ASS), 535 to 537 (WSS), and S537 contribute to the FAD site. S511 is a binding site for substrate. Position 626–629 (626–629 (GPGR)) interacts with substrate. FAD-binding positions include R654, Q724, and 724–728 (QVCGG). G752 serves as a coordination point for substrate. FAD contacts are provided by residues 753-755 (PDE) and E755.

Belongs to the acyl-CoA dehydrogenase family. Homodimer. It depends on FAD as a cofactor.

It localises to the peroxisome. The protein localises to the mitochondrion membrane. The catalysed reaction is a 2,3-saturated acyl-CoA + oxidized [electron-transfer flavoprotein] + H(+) = a (2E)-enoyl-CoA + reduced [electron-transfer flavoprotein]. It catalyses the reaction docosanoyl-CoA + oxidized [electron-transfer flavoprotein] + H(+) = (2E)-docosenoyl-CoA + reduced [electron-transfer flavoprotein]. The enzyme catalyses tetracosanoyl-CoA + oxidized [electron-transfer flavoprotein] + H(+) = (2E)-tetracosenoyl-CoA + reduced [electron-transfer flavoprotein]. It carries out the reaction eicosanoyl-CoA + oxidized [electron-transfer flavoprotein] + H(+) = (2E)-eicosenoyl-CoA + reduced [electron-transfer flavoprotein]. The catalysed reaction is hexacosanoyl-CoA + oxidized [electron-transfer flavoprotein] + H(+) = (2E)-hexacosenoyl-CoA + reduced [electron-transfer flavoprotein]. It catalyses the reaction tricosanoyl-CoA + oxidized [electron-transfer flavoprotein] + H(+) = (2E)-tricosenoyl-CoA + reduced [electron-transfer flavoprotein]. It participates in lipid metabolism; fatty acid beta-oxidation. Functionally, acyl-CoA dehydrogenase, that exhibits maximal activity towards saturated C22-CoA. Probably participates in beta-oxydation and energy production but could also play a role in the metabolism of specific fatty acids to control fatty acids composition of cellular lipids in brain. The polypeptide is Acyl-CoA dehydrogenase family member 11 (ACAD11) (Gallus gallus (Chicken)).